Consider the following 411-residue polypeptide: 2,3-bisphosphoglycerate-independent phosphoglycerate mutase (411 aa).

The protein belongs to the BPG-independent phosphoglycerate mutase family. A-PGAM subfamily.

It catalyses the reaction (2R)-2-phosphoglycerate = (2R)-3-phosphoglycerate. Its pathway is carbohydrate degradation; glycolysis; pyruvate from D-glyceraldehyde 3-phosphate: step 3/5. Its function is as follows. Catalyzes the interconversion of 2-phosphoglycerate and 3-phosphoglycerate. This is 2,3-bisphosphoglycerate-independent phosphoglycerate mutase from Methanosphaerula palustris (strain ATCC BAA-1556 / DSM 19958 / E1-9c).